The sequence spans 309 residues: Minor serine/threonine-protein phosphatase PP2A-1 catalytic subunit (309 aa).

Mn(2+)-binding residues include aspartate 57, histidine 59, aspartate 85, and asparagine 117. Residue histidine 118 is the Proton donor of the active site. The Mn(2+) site is built by histidine 167 and histidine 241. Leucine 309 is subject to Leucine methyl ester.

This sequence belongs to the PPP phosphatase family. PP-2A subfamily. Mn(2+) is required as a cofactor.

It catalyses the reaction O-phospho-L-seryl-[protein] + H2O = L-seryl-[protein] + phosphate. It carries out the reaction O-phospho-L-threonyl-[protein] + H2O = L-threonyl-[protein] + phosphate. Essential role in cell cycle control. PP2A may be involved in controlling the entry into mitosis, possibly acting as an inhibitor. In Schizosaccharomyces pombe (strain 972 / ATCC 24843) (Fission yeast), this protein is Minor serine/threonine-protein phosphatase PP2A-1 catalytic subunit (ppa1).